Here is a 295-residue protein sequence, read N- to C-terminus: Acetylglutamate kinase (295 aa).

Substrate contacts are provided by residues 61-62 (GG), Arg-83, and Asn-187.

Belongs to the acetylglutamate kinase family. ArgB subfamily.

The protein resides in the cytoplasm. It catalyses the reaction N-acetyl-L-glutamate + ATP = N-acetyl-L-glutamyl 5-phosphate + ADP. It functions in the pathway amino-acid biosynthesis; L-arginine biosynthesis; N(2)-acetyl-L-ornithine from L-glutamate: step 2/4. Catalyzes the ATP-dependent phosphorylation of N-acetyl-L-glutamate. This chain is Acetylglutamate kinase, found in Methanocorpusculum labreanum (strain ATCC 43576 / DSM 4855 / Z).